We begin with the raw amino-acid sequence, 208 residues long: Thymidylate kinase (208 aa).

Position 10–17 (10–17 (GLEGAGKS)) interacts with ATP.

This sequence belongs to the thymidylate kinase family.

It carries out the reaction dTMP + ATP = dTDP + ADP. Functionally, phosphorylation of dTMP to form dTDP in both de novo and salvage pathways of dTTP synthesis. The protein is Thymidylate kinase of Pseudoalteromonas translucida (strain TAC 125).